The chain runs to 513 residues: MDNAKIVIKSIKDYIVEVQGDYDFRLYEVFQLTDDVKGFCLSVDEKRTFLLIDGDTSKIKVGTEIIPLESRFIAKTYKDYFGKIIDIDGKVLYSESEDQEISEKAYENENSAFKVASGIQDRVKLNEPLETGIFSIDILLPIGKGQRQLILGDSKTGKTSIALSTMINQKENDIKIIYVSIGLKSNDLKRIYKTIVEQKIAHKTILMHASSDNSFQQFLIPYVAMAHAENIMQSGEDVLIIFDDLTNHANVLREIALLTGKPVGKEAFPGDLFYSHSKLLERAGKFKNGYSITCFPIVRTINNDMTSLLASNIASITDGQIVTNSEIKDQGILPAIDIGLSVSRTGSSVQSVSLSKIAIEISKIYSKYKQNEKFSDTNFDLNDSVRDIIKKGKILLKILNQKEFQAYSRSFNLIIAYIVVWGIFEDEEKIYDKLIYLYFVLRYDYIGKILVNVVDKKSGVDGMVDEGVLKAEIMRLLAHFKDIHNIKTKSYNDGKFNLSTRVLHKVKDRIWEK.

152–159 contacts ATP; the sequence is GDSKTGKT.

Belongs to the ATPase alpha/beta chains family. In terms of assembly, F-type ATPases have 2 components, CF(1) - the catalytic core - and CF(0) - the membrane proton channel. CF(1) has five subunits: alpha(3), beta(3), gamma(1), delta(1), epsilon(1). CF(0) has three main subunits: a(1), b(2) and c(9-12). The alpha and beta chains form an alternating ring which encloses part of the gamma chain. CF(1) is attached to CF(0) by a central stalk formed by the gamma and epsilon chains, while a peripheral stalk is formed by the delta and b chains.

The protein resides in the cell membrane. The enzyme catalyses ATP + H2O + 4 H(+)(in) = ADP + phosphate + 5 H(+)(out). Functionally, produces ATP from ADP in the presence of a proton gradient across the membrane. The alpha chain is a regulatory subunit. The sequence is that of ATP synthase subunit alpha 2 from Mycoplasmopsis pulmonis (strain UAB CTIP) (Mycoplasma pulmonis).